Here is a 1019-residue protein sequence, read N- to C-terminus: Katanin p80 WD40 repeat-containing subunit B1 homolog KTN80.1 (1019 aa).

7 WD repeats span residues 13–53, 56–95, 98–137, 140–181, 183–221, 224–264, and 266–303; these read AHSG…SPMS, GHTSPVDSVAFNSEEVLVLAGASSGVIKLWDLEESKMVRA, GHRSNCSAVEFHPFGEFLASGSSDTNLRVWDTRKKGCIQT, GHTR…HEFK, HEGPIRSLDFHPLEFLLATGSADRTVKFWDLETFELIGT, PEAT…DGVD, and GWSTLGDFCINEGKFIGCSYYRNSVGIWVSDISELEPY. A DWD box motif is present at residues 114-130; it reads FLASGSSDTNLRVWDTR. Disordered stretches follow at residues 388-424, 455-474, 517-581, and 607-652; these read FGPAGDKYSSTSRDSDSGEESSYSERESIPFSRTKSG, KSGLAVEEEPQTQNAFLSEQ, IHRS…GSRE, and RGEK…RARS. Residues 465 to 474 show a composition bias toward polar residues; the sequence is QTQNAFLSEQ. The span at 553 to 572 shows a compositional bias: basic and acidic residues; that stretch reads IPSKTERVLSREKPGDEQKN. Polar residues predominate over residues 614 to 628; it reads TEGASTTIEQNNNAV.

The protein belongs to the WD repeat KATNB1 family. As to quaternary structure, component of KTN80-KTN1 complexes composed of a hexamer of KTN1-KTN80 heterodimers that sense microtubule (MT) geometry to confer precise MT severing. Interacts directly with AAA1/KTN1 and KTN80.3, and weakly with KTN80.4. Expressed at low levels in siliques, flowers, leaves, stems and roots.

The protein resides in the cytoplasm. The protein localises to the cytoskeleton. In terms of biological role, may participate in a complex which severs microtubules in an ATP-dependent manner. Microtubule severing may promote rapid reorganization of cellular microtubule arrays. Confers precision to microtubule (MT) severing by specific targeting of KTN1 to MT cleavage sites such as crossover or branching nucleation sites. Together with other KTN80s, regulates cell elongation by modulating MT organization. The chain is Katanin p80 WD40 repeat-containing subunit B1 homolog KTN80.1 from Arabidopsis thaliana (Mouse-ear cress).